The primary structure comprises 92 residues: Sec-independent protein translocase protein TatA (92 aa).

Residues 2–22 (IPANFGGTELIILLVIILLLF) traverse the membrane as a helical segment. Residues 43–92 (KGTSGAYEELEEKKGEEEKDEGGKKEAEASGRGEEEQQARAAGEAGRKQG) form a disordered region. Basic and acidic residues predominate over residues 53 to 80 (EEKKGEEEKDEGGKKEAEASGRGEEEQQ).

It belongs to the TatA/E family. As to quaternary structure, the Tat system comprises two distinct complexes: a TatABC complex, containing multiple copies of TatA, TatB and TatC subunits, and a separate TatA complex, containing only TatA subunits. Substrates initially bind to the TatABC complex, which probably triggers association of the separate TatA complex to form the active translocon.

Its subcellular location is the cell membrane. Its function is as follows. Part of the twin-arginine translocation (Tat) system that transports large folded proteins containing a characteristic twin-arginine motif in their signal peptide across membranes. TatA could form the protein-conducting channel of the Tat system. The protein is Sec-independent protein translocase protein TatA of Rubrobacter xylanophilus (strain DSM 9941 / JCM 11954 / NBRC 16129 / PRD-1).